The chain runs to 316 residues: MKILLANPRGFCAGVDRAISIVERALELYQPPIYVRHEVVHNRFVVEGLKQRGARFVEELNEVPDDNIVIFSAHGVSQAVRQEAKERSLTVFDATCPLVTKVHMEVARASRKHMEVVLIGHAGHPEVEGTMGQYASDTGGMYLVEKPEDVVSLQAKVKDPSNLHYVSQTTLSVDETADVIDELRRVFPKIQGPRKDDICYATQNRQDAVRILAEQVDVMVVVGSKNSSNSTRLKELAEKLGTPGYLIDCPQDIDPEWFVDAQLIGVTAGASAPEELVNQILDRIKELGATSVEEVLGREENMFFEVPKELQIKQVD.

Cys12 provides a ligand contact to [4Fe-4S] cluster. Residues His41 and His74 each coordinate (2E)-4-hydroxy-3-methylbut-2-enyl diphosphate. The dimethylallyl diphosphate site is built by His41 and His74. Isopentenyl diphosphate contacts are provided by His41 and His74. A [4Fe-4S] cluster-binding site is contributed by Cys96. His124 lines the (2E)-4-hydroxy-3-methylbut-2-enyl diphosphate pocket. His124 lines the dimethylallyl diphosphate pocket. His124 contributes to the isopentenyl diphosphate binding site. Glu126 functions as the Proton donor in the catalytic mechanism. Thr169 lines the (2E)-4-hydroxy-3-methylbut-2-enyl diphosphate pocket. Cys199 contributes to the [4Fe-4S] cluster binding site. Residues Ser227, Ser228, Asn229, and Ser271 each coordinate (2E)-4-hydroxy-3-methylbut-2-enyl diphosphate. Positions 227, 228, 229, and 271 each coordinate dimethylallyl diphosphate. Positions 227, 228, 229, and 271 each coordinate isopentenyl diphosphate.

It belongs to the IspH family. Requires [4Fe-4S] cluster as cofactor.

It carries out the reaction isopentenyl diphosphate + 2 oxidized [2Fe-2S]-[ferredoxin] + H2O = (2E)-4-hydroxy-3-methylbut-2-enyl diphosphate + 2 reduced [2Fe-2S]-[ferredoxin] + 2 H(+). The catalysed reaction is dimethylallyl diphosphate + 2 oxidized [2Fe-2S]-[ferredoxin] + H2O = (2E)-4-hydroxy-3-methylbut-2-enyl diphosphate + 2 reduced [2Fe-2S]-[ferredoxin] + 2 H(+). Its pathway is isoprenoid biosynthesis; dimethylallyl diphosphate biosynthesis; dimethylallyl diphosphate from (2E)-4-hydroxy-3-methylbutenyl diphosphate: step 1/1. It functions in the pathway isoprenoid biosynthesis; isopentenyl diphosphate biosynthesis via DXP pathway; isopentenyl diphosphate from 1-deoxy-D-xylulose 5-phosphate: step 6/6. Its function is as follows. Catalyzes the conversion of 1-hydroxy-2-methyl-2-(E)-butenyl 4-diphosphate (HMBPP) into a mixture of isopentenyl diphosphate (IPP) and dimethylallyl diphosphate (DMAPP). Acts in the terminal step of the DOXP/MEP pathway for isoprenoid precursor biosynthesis. This Vibrio cholerae serotype O1 (strain ATCC 39315 / El Tor Inaba N16961) protein is 4-hydroxy-3-methylbut-2-enyl diphosphate reductase.